The sequence spans 1493 residues: Myosin-13 (1493 aa).

Residues 18 to 67 (KVGSIVWVQDPEEAWIDGEVVEVNGEDIKVQCTSGKTVVAKGSNTYPKDM) form the Myosin N-terminal SH3-like domain. Residues 72–741 (SGVDDMTTLA…QMAELDDRRT (670 aa)) form the Myosin motor domain. ATP contacts are provided by residues 166–173 (GESGAGKT) and 219–227 (NNNSSRFGK). 4 actin-binding regions span residues 504 to 538 (LIEKKRGGIIALLDEACMFPRSTHKTFSQKLYETL), 540 to 563 (DNKYFSKPKLSRTDFTICHYAGDV), 598 to 622 (FPPLVEDANKQSKFSSIASQFKQQL), and 622 to 644 (LASLIEGLNTTEPHYIRCVKPNN). IQ domains are found at residues 744–773 (LGRAACIIQWKFRSYLTRQSFIMLRNAAIN), 767–796 (LRNAAINIQAVYRGQVARYRFENLRREAAA), 792–821 (REAAALKIQRALRIHLDRKRSYIEAVVTVQ), 813–842 (YIEAVVTVQSGLRGMAARVVLRRKTKATTV), 836–865 (KTKATTVIQSHCRRLRAELHYKKLKKAAIT), and 859–888 (LKKAAITTQSAWRARLARKELRKLKTDARD). Positions 889-1057 (TVVLQAAKSM…NFLKESVLTT (169 aa)) form a coiled coil. The disordered stretch occupies residues 1085–1114 (QLSGAEFTTPPRIQESGSDTKSRGSHIDPQ). Residues 1102-1114 (SDTKSRGSHIDPQ) show a composition bias toward basic and acidic residues. Positions 1161-1444 (DRLVQMIGSA…IASMTGVMTD (284 aa)) constitute a Dilute domain.

This sequence belongs to the TRAFAC class myosin-kinesin ATPase superfamily. Myosin family. Plant myosin class XI subfamily. Homodimer.

Myosin heavy chain that is required for the cell cycle-regulated transport of various organelles and proteins for their segregation. Functions by binding with its tail domain to receptor proteins on organelles and exerting force with its N-terminal motor domain against actin filaments, thereby transporting its cargo along polarized actin cables. In Arabidopsis thaliana (Mouse-ear cress), this protein is Myosin-13 (XI-G).